The following is a 728-amino-acid chain: Catalase-peroxidase 1 (728 aa).

An N-terminal signal peptide occupies residues 1–22; it reads MDKTQSSQGKCPVMHGANSAVA. A cross-link (tryptophyl-tyrosyl-methioninium (Trp-Tyr) (with M-251)) is located at residues 97 to 225; it reads WHSAGTYRVA…LAAVMMGLIY (129 aa). His-98 functions as the Proton acceptor in the catalytic mechanism. The segment at residues 225–251 is a cross-link (tryptophyl-tyrosyl-methioninium (Tyr-Met) (with W-97)); that stretch reads YVNPEGVDGKPDPLRTAQDVRVTFARM. Position 266 (His-266) interacts with heme b.

The protein belongs to the peroxidase family. Peroxidase/catalase subfamily. As to quaternary structure, homodimer or homotetramer. It depends on heme b as a cofactor. Post-translationally, formation of the three residue Trp-Tyr-Met cross-link is important for the catalase, but not the peroxidase activity of the enzyme.

It catalyses the reaction H2O2 + AH2 = A + 2 H2O. The catalysed reaction is 2 H2O2 = O2 + 2 H2O. In terms of biological role, bifunctional enzyme with both catalase and broad-spectrum peroxidase activity. This Shewanella sp. (strain MR-4) protein is Catalase-peroxidase 1.